A 1377-amino-acid polypeptide reads, in one-letter code: Dicer-like protein 2 (1377 aa).

One can recognise a Helicase ATP-binding domain in the interval 23-203 (MFEASLQENI…LSMIESNMNA (181 aa)). ATP is bound at residue 36-43 (MDTGSGKT). The DEAH box motif lies at 144 to 147 (DEAH). Residues 367-544 (KLEALISFLS…ALALETMAEV (178 aa)) enclose the Helicase C-terminal domain. Residues 563–657 (AVARLHHFCS…LPLTRKPELR (95 aa)) enclose the Dicer dsRNA-binding fold domain. 2 RNase III domains span residues 916-1056 (ATRL…MDGG) and 1090-1274 (NDSL…VDSR). The Mg(2+) site is built by glutamate 1129, aspartate 1260, and glutamate 1263.

This sequence belongs to the helicase family. Dicer subfamily. The cofactor is Mg(2+). It depends on Mn(2+) as a cofactor.

In terms of biological role, dicer-like endonuclease involved in cleaving double-stranded RNA in the RNA interference (RNAi) pathway. Produces 21 to 25 bp dsRNAs (siRNAs) which target the selective destruction of homologous RNAs leading to sequence-specific suppression of gene expression, called post-transcriptional gene silencing (PTGS). Part of a broad host defense response against viral infection and transposons. This is Dicer-like protein 2 (dcl2) from Aspergillus terreus (strain NIH 2624 / FGSC A1156).